Consider the following 254-residue polypeptide: Probable protein ABIL5 (254 aa).

The interval 1-26 (MEVAEAGVDGVAGRRQQEEASGAAPF) is disordered.

Belongs to the ABI family. In terms of assembly, binds SCAR.

It localises to the cytoplasm. Its subcellular location is the cytoskeleton. Involved in regulation of actin and microtubule organization. Part of a WAVE complex that activates the Arp2/3 complex. In Oryza sativa subsp. japonica (Rice), this protein is Probable protein ABIL5.